A 1054-amino-acid chain; its full sequence is Topoisomerase 1-associated factor 1 (1054 aa).

Disordered regions lie at residues 522-543 (KADD…HESA), 823-846 (RDDK…EDDE), 865-953 (EMFA…TINL), and 968-1054 (VSDG…DDDE). Positions 823–838 (RDDKERRGAGGDKEGS) are enriched in basic and acidic residues. A compositionally biased stretch (basic residues) spans 877-887 (KTKQKLKRKGT). Basic and acidic residues-rich tracts occupy residues 890–901 (STREREKQRDYT), 928–953 (ERDR…TINL), and 979–1017 (TESH…HDSD).

Belongs to the timeless family. In terms of assembly, component of the fork protection complex (FPC) consisting of TOF1 and CSM3.

The protein localises to the nucleus. In terms of biological role, forms a fork protection complex (FPC) with CSM3 and which is required for chromosome segregation during meiosis and DNA damage repair. FPC coordinates leading and lagging strand synthesis and moves with the replication fork. FPC stabilizes replication forks in a configuration that is recognized by replication checkpoint sensors. The protein is Topoisomerase 1-associated factor 1 (TOF1) of Yarrowia lipolytica (strain CLIB 122 / E 150) (Yeast).